A 307-amino-acid polypeptide reads, in one-letter code: Elongation factor Ts (307 aa).

Residues 80-83 (TDFV) are involved in Mg(2+) ion dislocation from EF-Tu.

It belongs to the EF-Ts family.

Its subcellular location is the cytoplasm. Functionally, associates with the EF-Tu.GDP complex and induces the exchange of GDP to GTP. It remains bound to the aminoacyl-tRNA.EF-Tu.GTP complex up to the GTP hydrolysis stage on the ribosome. This is Elongation factor Ts from Clostridium botulinum (strain Kyoto / Type A2).